The primary structure comprises 922 residues: Lysine-specific demethylase 4 (922 aa).

Residues 1–15 (MASAATTTHFPSSRI) are compositionally biased toward polar residues. Disordered stretches follow at residues 1-21 (MASA…EPCA) and 42-61 (SSSC…MFTD). One can recognise a JmjN domain in the interval 87 to 130 (VLTFYPTMREFKNFSQYIKKIEQNGGHLKAGIAKIVAPEGWTPR). Tyr213 provides a ligand contact to 2-oxoglutarate. One can recognise a JmjC domain in the interval 223 to 388 (DAQVEEWNMN…YGKDAVLCDC (166 aa)). Positions 265 and 267 each coordinate Fe cation. 2-oxoglutarate-binding residues include Asn275 and Lys283. Zn(2+) is bound by residues Cys314 and His320. Lys321 serves as a coordination point for 2-oxoglutarate. His356 contacts Fe cation. The Zn(2+) site is built by Cys386 and Cys388. Residues 435–475 (KRRQSLADASKIAKRARLGASSTATDSDGSSGSSGSEEATE) are disordered. The segment covering 453–475 (GASSTATDSDGSSGSSGSEEATE) has biased composition (low complexity). The segment at 639 to 675 (TTSCQLCELRGGALIPCQIGTDSTWAHVACALFNRRA) adopts a C2HC pre-PHD-type zinc-finger fold. A PHD-type; degenerate zinc finger spans residues 723-783 (WECVVCHRTD…GVVMICHKHE (61 aa)).

This sequence belongs to the JHDM3 histone demethylase family. It depends on Fe(2+) as a cofactor.

The protein localises to the nucleus. The catalysed reaction is N(6),N(6),N(6)-trimethyl-L-lysyl(9)-[histone H3] + 2 2-oxoglutarate + 2 O2 = N(6)-methyl-L-lysyl(9)-[histone H3] + 2 formaldehyde + 2 succinate + 2 CO2. It catalyses the reaction N(6),N(6),N(6)-trimethyl-L-lysyl(36)-[histone H3] + 2 2-oxoglutarate + 2 O2 = N(6)-methyl-L-lysyl(36)-[histone H3] + 2 formaldehyde + 2 succinate + 2 CO2. Histone demethylase that specifically demethylates 'Lys-9' and 'Lys-36' residues of histone H3, thereby playing a central role in histone code. Demethylation of Lys residue generates formaldehyde and succinate. Involved in the negative regulation of lifespan in a germline-dependent fashion. This Caenorhabditis elegans protein is Lysine-specific demethylase 4 (jmjd-2).